We begin with the raw amino-acid sequence, 453 residues long: V-type proton ATPase subunit B (453 aa).

Arg-341 lines the ATP pocket.

It belongs to the ATPase alpha/beta chains family. As to quaternary structure, V-ATPase is a heteromultimeric enzyme made up of two complexes: the ATP-hydrolytic V1 complex and the proton translocation V0 complex. The V1 complex consists of three catalytic AB heterodimers that form a heterohexamer, three peripheral stalks each consisting of EG heterodimers, one central rotor including subunits D and F, and the regulatory subunits C and H. The proton translocation complex V0 consists of the proton transport subunit a, a ring of proteolipid subunits c9c'', rotary subunit d, subunits e and f, and two accessory subunits.

In terms of biological role, non-catalytic subunit of the V1 complex of vacuolar(H+)-ATPase (V-ATPase), a multisubunit enzyme composed of a peripheral complex (V1) that hydrolyzes ATP and a membrane integral complex (V0) that translocates protons. V-ATPase is responsible for acidifying and maintaining the pH of intracellular compartments and in some cell types, is targeted to the plasma membrane, where it is responsible for acidifying the extracellular environment. Essential for the proper assembly and activity of V-ATPase. The protein is V-type proton ATPase subunit B (ATP6V1B) of Gallus gallus (Chicken).